The primary structure comprises 452 residues: Transcription factor AP-2-delta (452 aa).

S239 carries the phosphoserine; by PKA modification. The H-S-H (helix-span-helix), dimerization stretch occupies residues 280-410 (RRKAANVTLL…VLSEMLNYLE (131 aa)). Positions 416–452 (KNGGAADSGQGHANSEKAPLRKTSEAAVKEGKTEKTD) are disordered. Basic and acidic residues predominate over residues 429 to 452 (NSEKAPLRKTSEAAVKEGKTEKTD).

The protein belongs to the AP-2 family. In terms of assembly, binds DNA as a dimer. Can form homodimers or heterodimers with other AP-2 family members. As to expression, highly expressed in brain, placenta, skeletal muscle, thymus, small intestine, and prostate, and expressed at lower levels in leukocyte, spleen, testis, ovary and colon. Barely detectable in heart, kidney, liver, lung or pancreas.

It is found in the nucleus. Its function is as follows. Sequence-specific DNA-binding protein that interacts with inducible viral and cellular enhancer elements to regulate transcription of selected genes. AP-2 factors bind to the consensus sequence 5'-GCCNNNGGC-3' and activate genes involved in a large spectrum of important biological functions including proper eye, face, body wall, limb and neural tube development. They also suppress a number of genes including MCAM/MUC18, C/EBP alpha and MYC. The sequence is that of Transcription factor AP-2-delta from Homo sapiens (Human).